The chain runs to 639 residues: Extracellular metalloproteinase 9 (639 aa).

The signal sequence occupies residues 1 to 19; sequence MHGLLLAAGLLSLPLRALG. Positions 20–250 are excised as a propeptide; the sequence is HPNPNPQMHT…IHGVVDYVAD (231 aa). N-linked (GlcNAc...) asparagine glycosylation occurs at Asn-278. Residues 293 to 312 form a disordered region; sequence PTTRGNNGIAQDNPSGGNQY. Zn(2+) is bound at residue His-434. Glu-435 is an active-site residue. His-438 is a binding site for Zn(2+).

It belongs to the peptidase M36 family. Requires Zn(2+) as cofactor.

It is found in the secreted. Secreted metalloproteinase that allows assimilation of proteinaceous substrates and probably acts as a virulence factor. In Coccidioides posadasii (strain C735) (Valley fever fungus), this protein is Extracellular metalloproteinase 9 (MEP9).